The sequence spans 163 residues: 2-C-methyl-D-erythritol 2,4-cyclodiphosphate synthase (163 aa).

Positions 11 and 13 each coordinate a divalent metal cation. 4-CDP-2-C-methyl-D-erythritol 2-phosphate-binding positions include 11–13 (DIH) and 37–38 (HS). Residue H45 coordinates a divalent metal cation. 4-CDP-2-C-methyl-D-erythritol 2-phosphate is bound by residues 59–61 (DIG), 64–68 (FSDTD), 103–109 (AQVPKMA), and R145.

It belongs to the IspF family. In terms of assembly, homotrimer. Requires a divalent metal cation as cofactor.

It catalyses the reaction 4-CDP-2-C-methyl-D-erythritol 2-phosphate = 2-C-methyl-D-erythritol 2,4-cyclic diphosphate + CMP. Its pathway is isoprenoid biosynthesis; isopentenyl diphosphate biosynthesis via DXP pathway; isopentenyl diphosphate from 1-deoxy-D-xylulose 5-phosphate: step 4/6. In terms of biological role, involved in the biosynthesis of isopentenyl diphosphate (IPP) and dimethylallyl diphosphate (DMAPP), two major building blocks of isoprenoid compounds. Catalyzes the conversion of 4-diphosphocytidyl-2-C-methyl-D-erythritol 2-phosphate (CDP-ME2P) to 2-C-methyl-D-erythritol 2,4-cyclodiphosphate (ME-CPP) with a corresponding release of cytidine 5-monophosphate (CMP). This Nitrosomonas europaea (strain ATCC 19718 / CIP 103999 / KCTC 2705 / NBRC 14298) protein is 2-C-methyl-D-erythritol 2,4-cyclodiphosphate synthase.